The primary structure comprises 871 residues: Alanine--tRNA ligase (871 aa).

Residues histidine 561, histidine 565, cysteine 665, and histidine 669 each contribute to the Zn(2+) site.

It belongs to the class-II aminoacyl-tRNA synthetase family. It depends on Zn(2+) as a cofactor.

It is found in the cytoplasm. The catalysed reaction is tRNA(Ala) + L-alanine + ATP = L-alanyl-tRNA(Ala) + AMP + diphosphate. Functionally, catalyzes the attachment of alanine to tRNA(Ala) in a two-step reaction: alanine is first activated by ATP to form Ala-AMP and then transferred to the acceptor end of tRNA(Ala). Also edits incorrectly charged Ser-tRNA(Ala) and Gly-tRNA(Ala) via its editing domain. The chain is Alanine--tRNA ligase from Dehalococcoides mccartyi (strain ATCC BAA-2100 / JCM 16839 / KCTC 5957 / BAV1).